A 776-amino-acid polypeptide reads, in one-letter code: Transcriptional regulator QRICH1 (776 aa).

Residue M1 is modified to N-acetylmethionine. Residues 6-48 form the CARD domain; that stretch reads ENTISFEEYIRVKARSVPQHRMKEFLDSLASKGPEALQEFQQT. Disordered regions lie at residues 139–164 and 218–240; these read IQGQAPQSAAPSIQTPSLQSPSPSQL and ALSPPPSQQGSPREGERRVGTAS. S345 bears the Phosphoserine mark. Residues K353 and K358 each participate in a glycyl lysine isopeptide (Lys-Gly) (interchain with G-Cter in SUMO2) cross-link. A compositionally biased stretch (low complexity) spans 419 to 429; sequence QQQPQQQTPQE. Residues 419–441 form a disordered region; sequence QQQPQQQTPQEQTPPPQQQQQQL. Residue S464 is modified to Phosphoserine.

The protein resides in the nucleus. It localises to the cytoplasm. Its subcellular location is the cell membrane. In terms of biological role, transcriptional regulator that acts as a mediator of the integrated stress response (ISR) through transcriptional control of protein homeostasis under conditions of ER stress. Controls the outcome of the unfolded protein response (UPR) which is an ER-stress response pathway. ER stress induces QRICH1 translation by a ribosome translation re-initiation mechanism in response to EIF2S1/eIF-2-alpha phosphorylation, and stress-induced QRICH1 regulates a transcriptional program associated with protein translation, protein secretion-mediated proteotoxicity and cell death during the terminal UPR. May cooperate with ATF4 transcription factor signaling to regulate ER homeostasis which is critical for cell viability. Up-regulates CASP3/caspase-3 activity in epithelial cells under ER stress. Central regulator of proteotoxicity associated with ER stress-mediated inflammatory diseases in the intestines and liver. Involved in chondrocyte hypertrophy, a process required for normal longitudinal bone growth. In Homo sapiens (Human), this protein is Transcriptional regulator QRICH1.